We begin with the raw amino-acid sequence, 101 residues long: Putative pterin-4-alpha-carbinolamine dehydratase (101 aa).

Belongs to the pterin-4-alpha-carbinolamine dehydratase family.

The enzyme catalyses (4aS,6R)-4a-hydroxy-L-erythro-5,6,7,8-tetrahydrobiopterin = (6R)-L-erythro-6,7-dihydrobiopterin + H2O. The sequence is that of Putative pterin-4-alpha-carbinolamine dehydratase from Burkholderia mallei (strain ATCC 23344).